The following is a 591-amino-acid chain: Developmental and secondary metabolism regulator VEA1 (591 aa).

The segment at 1-22 is disordered; it reads MATKASSILHPPNETEHTMSRI. The span at 13–22 shows a compositional bias: basic and acidic residues; that stretch reads NETEHTMSRI. One can recognise a Velvet domain in the interval 26 to 235; that stretch reads GKKLTYNLKV…AEQGCRVRIR (210 aa). The Nuclear localization signal signature appears at 40-45; sequence ERARAC. Positions 238–547 are disordered; the sequence is VRMRRREPKP…TSGGSDDEIM (310 aa). Over residues 245–260 the composition is skewed to basic and acidic residues; sequence PKPNKDYGAYDDRRIT. The span at 306-321 shows a compositional bias: polar residues; sequence HQQPSPNLAATPQSHL. Over residues 330 to 347 the composition is skewed to pro residues; sequence YHAPPPPPTAHPAPPPAY. Residues 386 to 395 show a composition bias toward polar residues; that stretch reads YDQSKSSLPM. A compositionally biased stretch (low complexity) spans 422-433; sequence PSQLHPTQQYQQ. Pro residues predominate over residues 434–448; that stretch reads PTPPPPPPAAIAPHP. The PEST stretch occupies residues 452–493; sequence RTPTKPSPSTFFPPTPSRLSVEVDSSNEADDAILNAIRTRRG. Positions 494–516 are enriched in basic and acidic residues; the sequence is YILDEKSGATKRSRDSSDHDLKP.

This sequence belongs to the velvet family. VeA subfamily. Component of the heterotrimeric velvet complex composed of LAE1, VEA1 and VEL2; VEA1 acting as a bridging protein between LAE1 and VEL2.

It localises to the nucleus. Its subcellular location is the cytoplasm. Component of the velvet transcription factor complex that controls sexual/asexual developmental ratio in response to light, promoting sexual development in the darkness while stimulating asexual sporulation under illumination. The velvet complex hat acts as a global regulator for secondary metabolite gene expression. Regulates cleistothecial formation and hyphal growth. Acts as a positive regulator of virulence. The chain is Developmental and secondary metabolism regulator VEA1 from Ajellomyces capsulatus (Darling's disease fungus).